The primary structure comprises 325 residues: Phosphate import ATP-binding protein PstB (325 aa).

Residues 79-320 (IDNYNLWYSN…PNNEKTKDYI (242 aa)) form the ABC transporter domain. ATP is bound at residue 111-118 (GPSGCGKS).

Belongs to the ABC transporter superfamily. Phosphate importer (TC 3.A.1.7) family. As to quaternary structure, the complex is composed of two ATP-binding proteins (PstB), two transmembrane proteins (PstC and PstA) and a solute-binding protein (PstS).

The protein localises to the cell membrane. The catalysed reaction is phosphate(out) + ATP + H2O = ADP + 2 phosphate(in) + H(+). Functionally, part of the ABC transporter complex PstSACB involved in phosphate import. Responsible for energy coupling to the transport system. The sequence is that of Phosphate import ATP-binding protein PstB from Mycoplasmoides gallisepticum (strain R(low / passage 15 / clone 2)) (Mycoplasma gallisepticum).